A 344-amino-acid chain; its full sequence is MSSYKLFCMGNPLLDLQVRDGEKLLEKYGLKSNDAILAEEKHLLLYDEIVKEHEVTYVAGGAAQNAARGAAYCLPPKSVVYTGCVGDDDLAEQLKAANKREGLDEAYLVKKGEKTGACAVIITGHDRSLVTTLRAAEKFEQSHLSSEAVAPLVDAVQFYYMEGYFVTHGLASALELAGKSAAKSKCFVLNFSAPFIPQFFMPAIQQLLPYVDIVIANESEAEAWASASGHPAPTDLAAVAKSLAMQPKTNPARPRVVIFTHGAEETVVVNSAEPGRVRTFKVDKLAEGEIVDTNGAGDAFAGGFLGALVAGRELDDSVEAGHKLAKISIQQIGPQFKWPKVQIL.

Asp298 is a catalytic residue.

It belongs to the carbohydrate kinase PfkB family. Mg(2+) is required as a cofactor.

It catalyses the reaction adenosine + ATP = AMP + ADP + H(+). It functions in the pathway purine metabolism; AMP biosynthesis via salvage pathway; AMP from adenosine: step 1/1. The polypeptide is Adenosine kinase (ADK) (Schizophyllum commune (Split gill fungus)).